The chain runs to 726 residues: Transcription factor 12 (726 aa).

Disordered regions lie at residues 27-75 (SPPV…SRGF), 89-223 (LVSH…TFFD), 243-267 (YGGMLGGSSSHMPQSGNYSNLHSHD), 289-309 (SSFHRSSASTSPFVTASHTPP), 345-367 (PDHTSSSFPSNPSTPVGSPSPLA), 380-409 (TASGPAGRAGTTQWTRATGQAPSSPSYENS), 501-532 (MGSVHREESGSLNNNNHSALQASAAPTSSSEL), 558-624 (VENQ…ERRM), and 694-726 (EEEKVSGVSGDPQQAHPAVHPGLTDTSNPMGHL). Positions 29 to 47 (PVNSGKNRPTTLGSSQFTA) are enriched in polar residues. A compositionally biased stretch (low complexity) spans 55 to 74 (SQASWASGGQSSPSFESSRG). Composition is skewed to polar residues over residues 145–157 (PGKSPTPFYSYTG), 249–263 (GSSSHMPQSGNYSNL), and 291–309 (FHRSSASTSPFVTASHTPP). Residues 348-359 (TSSSFPSNPSTP) show a composition bias toward low complexity. 2 stretches are compositionally biased toward polar residues: residues 389 to 409 (GTTQWTRATGQAPSSPSYENS) and 510 to 532 (GSLNNNNHSALQASAAPTSSSEL). The span at 559 to 575 (ENQDKDDMHDSHASDDL) shows a compositional bias: basic and acidic residues. Residues 592–603 (SSRPSCELSCSS) show a composition bias toward low complexity. A compositionally biased stretch (basic and acidic residues) spans 612-624 (PEQKAERERERRM). The region spanning 621–674 (ERRMANNARERLRVRDINEAFKELGRMCQLHLKSEKPQTKLLILHQAVAVILSL) is the bHLH domain. A class A specific domain region spans residues 676–699 (QQVRERNLNPKAACLKRREEEKVS). A compositionally biased stretch (polar residues) spans 717-726 (TDTSNPMGHL).

As to quaternary structure, efficient DNA binding requires dimerization with another bHLH protein.

The protein resides in the nucleus. Functionally, transcriptional regulator. Involved in the initiation of neuronal differentiation. Activates transcription by binding to the E box (5'-CANNTG-3'). May be involved in the functional network that regulates the development of the GnRH axis. The protein is Transcription factor 12 (tcf12) of Danio rerio (Zebrafish).